We begin with the raw amino-acid sequence, 585 residues long: MGAARIAPGLALLLCCPVLSSAYALVDADDVMTKEEQIFLLHRAQAQCEKRLKEVLQRPADIMESDKGWASAPTSGKPRKEKASGKLYPESGEDTGSRHQGRPCLPEWDHILCWPLGAPGEVVAMPCPDYIYDFNHKGHAYRRCDRNGSWELVPGHNRTWANYSECVKFLTNETREREVFDRLGMIYTVGYSVSLASLTVAVLILAYFRRLHCTRNYIHMHLFLSFMLRAVSIFVKDAVLYSGATLDEAERLTEEELRAIAQAPLPPVAATSYVGCRVAVTFFLYFLATNYYWILVEGLYLHSLIFMAFFSEKKYLWGFTVFGWGLPAIFVAVWVSVRATLANTGCWDLSSGNKKWIIQVPILASIVLNFILFINIVRVLATKLRETNAGRCDTRQQYRKLLKSTLVLMPLFGVHYIVFMATPYTEVSGTLWQVQMHYEMLFNSFQGFFVAIIYCFCNGEVQAEIKKSWSRWTLALDFKRKARSGSSSYSYGPMVSHTSVTNVGPRTGLGLPLSPRLLPAATTNGHPQLPCHTKPETPALQTTPPVVAAPKDDGFLNGSCSGLDEEASAPERPSVLLQEEWETVM.

A signal peptide spans 1-26 (MGAARIAPGLALLLCCPVLSSAYALV). Over 27-184 (DADDVMTKEE…REREVFDRLG (158 aa)) the chain is Extracellular. 3 disulfide bridges follow: Cys48–Cys113, Cys104–Cys144, and Cys127–Cys166. A disordered region spans residues 66 to 100 (DKGWASAPTSGKPRKEKASGKLYPESGEDTGSRHQ). Residues Asn147, Asn157, Asn162, and Asn172 are each glycosylated (N-linked (GlcNAc...) asparagine). The helical transmembrane segment at 185 to 208 (MIYTVGYSVSLASLTVAVLILAYF) threads the bilayer. Residues 209–215 (RRLHCTR) are Cytoplasmic-facing. Residues 216–235 (NYIHMHLFLSFMLRAVSIFV) form a helical membrane-spanning segment. Topologically, residues 236-277 (KDAVLYSGATLDEAERLTEEELRAIAQAPLPPVAATSYVGCR) are extracellular. A helical membrane pass occupies residues 278–301 (VAVTFFLYFLATNYYWILVEGLYL). At 302 to 315 (HSLIFMAFFSEKKY) the chain is on the cytoplasmic side. The helical transmembrane segment at 316-337 (LWGFTVFGWGLPAIFVAVWVSV) threads the bilayer. Residues 338–356 (RATLANTGCWDLSSGNKKW) lie on the Extracellular side of the membrane. A helical transmembrane segment spans residues 357–377 (IIQVPILASIVLNFILFINIV). The Cytoplasmic segment spans residues 378–404 (RVLATKLRETNAGRCDTRQQYRKLLKS). The chain crosses the membrane as a helical span at residues 405–423 (TLVLMPLFGVHYIVFMATP). At 424-435 (YTEVSGTLWQVQ) the chain is on the extracellular side. Residues 436–458 (MHYEMLFNSFQGFFVAIIYCFCN) form a helical membrane-spanning segment. Residues 459–585 (GEVQAEIKKS…LLQEEWETVM (127 aa)) lie on the Cytoplasmic side of the membrane. The short motif at 469-472 (WSRW) is the Important for interaction with G proteins element. Thr543 bears the Phosphothreonine mark.

This sequence belongs to the G-protein coupled receptor 2 family. Homodimer in the absence of bound ligand. Peptide hormone binding leads to dissociation of the homodimer. In terms of processing, N-glycosylated.

Its subcellular location is the cell membrane. G-protein-coupled receptor for parathyroid hormone (PTH) and for parathyroid hormone-related peptide (PTHLH). Ligand binding causes a conformation change that triggers signaling via guanine nucleotide-binding proteins (G proteins) and modulates the activity of downstream effectors, such as adenylate cyclase (cAMP). PTH1R is coupled to G(s) G alpha proteins and mediates activation of adenylate cyclase activity. PTHLH dissociates from PTH1R more rapidly than PTH; as consequence, the cAMP response induced by PTHLH decays faster than the response induced by PTH. The polypeptide is Parathyroid hormone/parathyroid hormone-related peptide receptor (PTH1R) (Sus scrofa (Pig)).